Reading from the N-terminus, the 314-residue chain is Deoxymugineic acid synthase 1-D (314 aa).

Residues 1–21 form a disordered region; that stretch reads MGAGEKTAAGMPRIGMGTAVQ. Aspartate 44 contacts NADP(+). The active-site Proton donor is tyrosine 49. Histidine 112 lines the substrate pocket. NADP(+) contacts are provided by residues 158–159, glutamine 180, 258–266, and 273–281; these read AN, FDEARMREN, and ELTEEERLR.

It belongs to the aldo/keto reductase family. As to expression, mostly expressed in root tissues, observed, at low levels, in mesocotyl and embryonic roots, seedling roots, crown and seedling leafes, mature bracts, anthers, pistil, caryopsis and embryos.

It catalyses the reaction 2'-deoxymugineate + NAD(+) = 3''-deamino-3''-oxonicotianamine + NADH + H(+). It carries out the reaction 2'-deoxymugineate + NADP(+) = 3''-deamino-3''-oxonicotianamine + NADPH + H(+). It participates in siderophore biosynthesis. Catalyzes the reduction of a 3''-keto intermediate during the biosynthesis of 2'-deoxymugineic acid (DMA) from L-Met. Involved in the formation of phytosiderophores (MAs) belonging to the mugineic acid family and required to acquire iron. The chain is Deoxymugineic acid synthase 1-D from Triticum aestivum (Wheat).